A 427-amino-acid polypeptide reads, in one-letter code: 3-phosphoshikimate 1-carboxyvinyltransferase (427 aa).

3-phosphoshikimate-binding residues include Lys-20, Ser-21, and Arg-25. Lys-20 is a binding site for phosphoenolpyruvate. Gly-92 and Arg-120 together coordinate phosphoenolpyruvate. 3-phosphoshikimate-binding residues include Ser-166, Gln-168, Asp-312, and Lys-339. Phosphoenolpyruvate is bound at residue Gln-168. Asp-312 functions as the Proton acceptor in the catalytic mechanism. Phosphoenolpyruvate contacts are provided by Arg-343 and Arg-385.

Belongs to the EPSP synthase family. In terms of assembly, monomer.

It is found in the cytoplasm. It carries out the reaction 3-phosphoshikimate + phosphoenolpyruvate = 5-O-(1-carboxyvinyl)-3-phosphoshikimate + phosphate. It participates in metabolic intermediate biosynthesis; chorismate biosynthesis; chorismate from D-erythrose 4-phosphate and phosphoenolpyruvate: step 6/7. Catalyzes the transfer of the enolpyruvyl moiety of phosphoenolpyruvate (PEP) to the 5-hydroxyl of shikimate-3-phosphate (S3P) to produce enolpyruvyl shikimate-3-phosphate and inorganic phosphate. In Streptococcus pneumoniae (strain 70585), this protein is 3-phosphoshikimate 1-carboxyvinyltransferase.